Consider the following 464-residue polypeptide: Trigger factor (464 aa).

In terms of domain architecture, PPIase FKBP-type spans 162 to 243 (GDFISIDLSA…VGTVKERELP (82 aa)). The segment at 428-464 (GASVDTAELFGNGEADTEEAASTDEVASDSAEGEDQK) is disordered.

The protein belongs to the FKBP-type PPIase family. Tig subfamily.

The protein localises to the cytoplasm. It carries out the reaction [protein]-peptidylproline (omega=180) = [protein]-peptidylproline (omega=0). In terms of biological role, involved in protein export. Acts as a chaperone by maintaining the newly synthesized protein in an open conformation. Functions as a peptidyl-prolyl cis-trans isomerase. The chain is Trigger factor from Rhodococcus opacus (strain B4).